Consider the following 368-residue polypeptide: Chorismate synthase (368 aa).

Position 46 (arginine 46) interacts with NADP(+). FMN-binding positions include 124–126 (RAS), glycine 284, 299–303 (KPTPS), and arginine 326.

The protein belongs to the chorismate synthase family. The cofactor is FMNH2.

It catalyses the reaction 5-O-(1-carboxyvinyl)-3-phosphoshikimate = chorismate + phosphate. Its pathway is metabolic intermediate biosynthesis; chorismate biosynthesis; chorismate from D-erythrose 4-phosphate and phosphoenolpyruvate: step 7/7. Its function is as follows. Catalyzes the anti-1,4-elimination of the C-3 phosphate and the C-6 proR hydrogen from 5-enolpyruvylshikimate-3-phosphate (EPSP) to yield chorismate, which is the branch point compound that serves as the starting substrate for the three terminal pathways of aromatic amino acid biosynthesis. This reaction introduces a second double bond into the aromatic ring system. This chain is Chorismate synthase, found in Pyrobaculum arsenaticum (strain DSM 13514 / JCM 11321 / PZ6).